A 335-amino-acid polypeptide reads, in one-letter code: Partner of xrn-2 protein 1 (335 aa).

Residues 7–91 enclose the XRN2-binding (XTBD) domain; that stretch reads VEAEKKLWES…SYVKASAAKK (85 aa). The disordered stretch occupies residues 95–119; that stretch reads VKTSDLEGASDESKKVKMEKSPSPV. Residues 105-114 show a composition bias toward basic and acidic residues; that stretch reads DESKKVKMEK.

As to quaternary structure, interacts (via N-terminus) with xrn-2; the interaction is direct.

Its subcellular location is the nucleus. The protein resides in the nucleolus. It localises to the nucleoplasm. Functionally, plays a role in maintenance of steady-state concentration and turnover of microRNAs (miRNA) by degradation of mature miRNA in complex with the exoribonuclease xrn-2. Stabilizes and enhances the accumulation and activity of the exoribonuclease xrn-2, and thus contributes to miRNA turnover. This chain is Partner of xrn-2 protein 1, found in Caenorhabditis elegans.